The primary structure comprises 346 residues: Holliday junction branch migration complex subunit RuvB (346 aa).

The interval 1–188 (MSDEYGPPER…FGIVQRLAYY (188 aa)) is large ATPase domain (RuvB-L). Residues Leu27, Arg28, Gly69, Lys72, Thr73, Thr74, 135–137 (EDF), Arg178, Tyr188, and Arg225 contribute to the ATP site. Thr73 provides a ligand contact to Mg(2+). A small ATPAse domain (RuvB-S) region spans residues 189-259 (PVDELTRIVQ…VAADAMELLD (71 aa)). Residues 262 to 346 (RNGLDEQDRR…QAAGSGDLFG (85 aa)) are head domain (RuvB-H). Arg298, Arg317, and Arg322 together coordinate DNA.

The protein belongs to the RuvB family. As to quaternary structure, homohexamer. Forms an RuvA(8)-RuvB(12)-Holliday junction (HJ) complex. HJ DNA is sandwiched between 2 RuvA tetramers; dsDNA enters through RuvA and exits via RuvB. An RuvB hexamer assembles on each DNA strand where it exits the tetramer. Each RuvB hexamer is contacted by two RuvA subunits (via domain III) on 2 adjacent RuvB subunits; this complex drives branch migration. In the full resolvosome a probable DNA-RuvA(4)-RuvB(12)-RuvC(2) complex forms which resolves the HJ.

It localises to the cytoplasm. It carries out the reaction ATP + H2O = ADP + phosphate + H(+). Its function is as follows. The RuvA-RuvB-RuvC complex processes Holliday junction (HJ) DNA during genetic recombination and DNA repair, while the RuvA-RuvB complex plays an important role in the rescue of blocked DNA replication forks via replication fork reversal (RFR). RuvA specifically binds to HJ cruciform DNA, conferring on it an open structure. The RuvB hexamer acts as an ATP-dependent pump, pulling dsDNA into and through the RuvAB complex. RuvB forms 2 homohexamers on either side of HJ DNA bound by 1 or 2 RuvA tetramers; 4 subunits per hexamer contact DNA at a time. Coordinated motions by a converter formed by DNA-disengaged RuvB subunits stimulates ATP hydrolysis and nucleotide exchange. Immobilization of the converter enables RuvB to convert the ATP-contained energy into a lever motion, pulling 2 nucleotides of DNA out of the RuvA tetramer per ATP hydrolyzed, thus driving DNA branch migration. The RuvB motors rotate together with the DNA substrate, which together with the progressing nucleotide cycle form the mechanistic basis for DNA recombination by continuous HJ branch migration. Branch migration allows RuvC to scan DNA until it finds its consensus sequence, where it cleaves and resolves cruciform DNA. This Halorhodospira halophila (strain DSM 244 / SL1) (Ectothiorhodospira halophila (strain DSM 244 / SL1)) protein is Holliday junction branch migration complex subunit RuvB.